A 338-amino-acid polypeptide reads, in one-letter code: Anthranilate phosphoribosyltransferase (338 aa).

Residues G81, 84-85 (GD), S89, 91-94 (NIST), 109-117 (KHGNRSVSS), and S121 contribute to the 5-phospho-alpha-D-ribose 1-diphosphate site. Residue G81 coordinates anthranilate. S93 is a binding site for Mg(2+). N112 is an anthranilate binding site. R167 contacts anthranilate. Residues D226 and E227 each contribute to the Mg(2+) site.

It belongs to the anthranilate phosphoribosyltransferase family. Homodimer. Requires Mg(2+) as cofactor.

It carries out the reaction N-(5-phospho-beta-D-ribosyl)anthranilate + diphosphate = 5-phospho-alpha-D-ribose 1-diphosphate + anthranilate. The protein operates within amino-acid biosynthesis; L-tryptophan biosynthesis; L-tryptophan from chorismate: step 2/5. In terms of biological role, catalyzes the transfer of the phosphoribosyl group of 5-phosphorylribose-1-pyrophosphate (PRPP) to anthranilate to yield N-(5'-phosphoribosyl)-anthranilate (PRA). The protein is Anthranilate phosphoribosyltransferase of Thioalkalivibrio sulfidiphilus (strain HL-EbGR7).